A 437-amino-acid polypeptide reads, in one-letter code: Purple acid phosphatase 18 (437 aa).

The first 23 residues, 1 to 23 (MEKWGILLLVTLSVSIIFTSAAA), serve as a signal peptide directing secretion. Asp-148, Asp-175, and Tyr-178 together coordinate Fe cation. Asp-175 lines the Zn(2+) pocket. Zn(2+)-binding residues include Asn-208 and His-291. Asn-208 is a substrate binding site. His-301 serves as the catalytic Proton donor. His-328 contributes to the Zn(2+) binding site. Position 328–330 (328–330 (HVH)) interacts with substrate. Residue His-330 coordinates Fe cation. N-linked (GlcNAc...) asparagine glycosylation occurs at Asn-390.

This sequence belongs to the metallophosphoesterase superfamily. Purple acid phosphatase family. As to quaternary structure, homodimer. Fe cation is required as a cofactor. Zn(2+) serves as cofactor. As to expression, expressed in roots, stems, leaves, flowers and siliques.

The protein resides in the secreted. The catalysed reaction is a phosphate monoester + H2O = an alcohol + phosphate. The polypeptide is Purple acid phosphatase 18 (PAP18) (Arabidopsis thaliana (Mouse-ear cress)).